The sequence spans 217 residues: Peptide methionine sulfoxide reductase MsrA 1 (217 aa).

Cysteine 54 is an active-site residue.

Belongs to the MsrA Met sulfoxide reductase family.

It carries out the reaction L-methionyl-[protein] + [thioredoxin]-disulfide + H2O = L-methionyl-(S)-S-oxide-[protein] + [thioredoxin]-dithiol. The catalysed reaction is [thioredoxin]-disulfide + L-methionine + H2O = L-methionine (S)-S-oxide + [thioredoxin]-dithiol. Has an important function as a repair enzyme for proteins that have been inactivated by oxidation. Catalyzes the reversible oxidation-reduction of methionine sulfoxide in proteins to methionine. This chain is Peptide methionine sulfoxide reductase MsrA 1 (msrA1), found in Caulobacter vibrioides (strain ATCC 19089 / CIP 103742 / CB 15) (Caulobacter crescentus).